The primary structure comprises 234 residues: Small ribosomal subunit protein eS4 (234 aa).

The S4 RNA-binding; degenerate domain maps to 38-99; the sequence is IPLLIALRDY…GNDYLVSYDR (62 aa).

The protein belongs to the eukaryotic ribosomal protein eS4 family.

This is Small ribosomal subunit protein eS4 (rps4e) from Picrophilus torridus (strain ATCC 700027 / DSM 9790 / JCM 10055 / NBRC 100828 / KAW 2/3).